Here is a 433-residue protein sequence, read N- to C-terminus: Legumain (433 aa).

A signal peptide spans 1–17 (MVWKVAVFLSVALGIGA). Asn-91 carries N-linked (GlcNAc...) asparagine glycosylation. His-148 is an active-site residue. Residue Asn-167 is glycosylated (N-linked (GlcNAc...) asparagine). The active-site Nucleophile is Cys-189. 2 N-linked (GlcNAc...) asparagine glycosylation sites follow: Asn-263 and Asn-272. Residues 324 to 433 (DLEESRQLTE…SMDHVCLGHY (110 aa)) constitute a propeptide that is removed on maturation. Disulfide bonds link Cys-378–Cys-412 and Cys-390–Cys-429.

This sequence belongs to the peptidase C13 family. Homodimer before autocatalytic removal of the propeptide. Monomer after autocatalytic processing. May interact with integrins. Activated by autocatalytic processing at pH 4. Ubiquitous. Particularly abundant in kidney, heart and placenta.

The protein localises to the lysosome. It catalyses the reaction Hydrolysis of proteins and small molecule substrates at -Asn-|-Xaa- bonds.. Its activity is regulated as follows. Inhibited by CST6. Functionally, has a strict specificity for hydrolysis of asparaginyl bonds. Can also cleave aspartyl bonds slowly, especially under acidic conditions. Involved in the processing of proteins for MHC class II antigen presentation in the lysosomal/endosomal system. Also involved in MHC class I antigen presentation in cross-presenting dendritic cells by mediating cleavage and maturation of Perforin-2 (MPEG1), thereby promoting antigen translocation in the cytosol. Required for normal lysosomal protein degradation in renal proximal tubules. Required for normal degradation of internalized EGFR. Plays a role in the regulation of cell proliferation via its role in EGFR degradation. The sequence is that of Legumain from Homo sapiens (Human).